The following is a 346-amino-acid chain: [LysW]-lysine/[LysW]-ornithine hydrolase (346 aa).

H68 contributes to the Zn(2+) binding site. The active site involves D70. D92 serves as a coordination point for Zn(2+). E122 serves as the catalytic Proton acceptor. Residues E123, E146, and H317 each contribute to the Zn(2+) site.

Belongs to the peptidase M20A family. LysK subfamily. Zn(2+) serves as cofactor. The cofactor is Co(2+).

It localises to the cytoplasm. It carries out the reaction [amino-group carrier protein]-C-terminal-gamma-(L-lysyl)-L-glutamate + H2O = [amino-group carrier protein]-C-terminal-L-glutamate + L-lysine. The catalysed reaction is [amino-group carrier protein]-C-terminal-gamma-(L-ornithyl)-L-glutamate + H2O = [amino-group carrier protein]-C-terminal-L-glutamate + L-ornithine. It participates in amino-acid biosynthesis; L-lysine biosynthesis via AAA pathway; L-lysine from L-alpha-aminoadipate (Thermus route): step 5/5. Its pathway is amino-acid biosynthesis; L-arginine biosynthesis. In terms of biological role, catalyzes the release of L-lysine from [LysW]-gamma-L-lysine and the release of L-ornithine from [LysW]-L-ornithine. The protein is [LysW]-lysine/[LysW]-ornithine hydrolase of Saccharolobus islandicus (strain Y.G.57.14 / Yellowstone #1) (Sulfolobus islandicus).